Here is a 69-residue protein sequence, read N- to C-terminus: DNA gyrase inhibitor YacG (69 aa).

The Zn(2+) site is built by Cys13, Cys16, Cys32, and Cys36.

It belongs to the DNA gyrase inhibitor YacG family. Interacts with GyrB. Zn(2+) serves as cofactor.

In terms of biological role, inhibits all the catalytic activities of DNA gyrase by preventing its interaction with DNA. Acts by binding directly to the C-terminal domain of GyrB, which probably disrupts DNA binding by the gyrase. The polypeptide is DNA gyrase inhibitor YacG (Neisseria meningitidis serogroup A / serotype 4A (strain DSM 15465 / Z2491)).